The chain runs to 366 residues: Fe-S cluster assembly protein DRE2 (366 aa).

The interval 8-167 (AQGSGRFLLL…KPDFGAQQAV (160 aa)) is N-terminal SAM-like domain. Residues 100–136 (RNRDNQIWGSGSDSAAGLGSSDGGGGGGGGEKKSSSE) are disordered. Low complexity predominate over residues 108–118 (GSGSDSAAGLG). A compositionally biased stretch (gly residues) spans 119–128 (SSDGGGGGGG). The segment at 168–258 (PLKLGRKKNL…EEELLGEFDM (91 aa)) is linker. The [2Fe-2S] cluster site is built by cysteine 268, cysteine 279, cysteine 282, and cysteine 284. Positions 268-284 (CRPKAGKRRRACKDCTC) are fe-S binding site A. Positions 329, 332, 340, and 343 each coordinate [4Fe-4S] cluster. Short sequence motifs (cx2C motif) lie at residues 329–332 (CGNC) and 340–343 (CDGC). The fe-S binding site B stretch occupies residues 329 to 343 (CGNCALGDAFRCDGC).

It belongs to the anamorsin family. In terms of assembly, monomer. Interacts with TAH18. Interacts with MIA40. It depends on [2Fe-2S] cluster as a cofactor. The cofactor is [4Fe-4S] cluster.

It is found in the cytoplasm. The protein localises to the mitochondrion intermembrane space. Functionally, component of the cytosolic iron-sulfur (Fe-S) protein assembly (CIA) machinery required for the maturation of extramitochondrial Fe-S proteins. Part of an electron transfer chain functioning in an early step of cytosolic Fe-S biogenesis, facilitating the de novo assembly of a [4Fe-4S] cluster on the scaffold complex CFD1-NBP35. Electrons are transferred to DRE2 from NADPH via the FAD- and FMN-containing protein TAH18. TAH18-DRE2 are also required for the assembly of the diferric tyrosyl radical cofactor of ribonucleotide reductase (RNR), probably by providing electrons for reduction during radical cofactor maturation in the catalytic small subunit RNR2. The protein is Fe-S cluster assembly protein DRE2 of Paracoccidioides lutzii (strain ATCC MYA-826 / Pb01) (Paracoccidioides brasiliensis).